The primary structure comprises 753 residues: Nigerose phosphorylase (753 aa).

348–349 (WD) lines the substrate pocket. Catalysis depends on E490, which acts as the Proton donor. 604 to 605 (KQ) is a substrate binding site.

This sequence belongs to the glycosyl hydrolase 65 family. As to quaternary structure, homodimer.

Its subcellular location is the cytoplasm. The catalysed reaction is nigerose + phosphate = beta-D-glucose 1-phosphate + D-glucose. Does not require divalent metal ions. Catalyzes the reversible phosphorolysis of nigerose. Also shows a weak activity on kojibiose. The chain is Nigerose phosphorylase from Lachnoclostridium phytofermentans (strain ATCC 700394 / DSM 18823 / ISDg) (Clostridium phytofermentans).